Consider the following 314-residue polypeptide: uncharacterized protein (314 aa).

This is an uncharacterized protein from Acanthamoeba polyphaga mimivirus (APMV).